The primary structure comprises 157 residues: N5-carboxyaminoimidazole ribonucleotide mutase (157 aa).

Substrate is bound by residues Ser-8, Asp-11, and Arg-38.

This sequence belongs to the AIR carboxylase family. Class I subfamily.

It carries out the reaction 5-carboxyamino-1-(5-phospho-D-ribosyl)imidazole + H(+) = 5-amino-1-(5-phospho-D-ribosyl)imidazole-4-carboxylate. Its pathway is purine metabolism; IMP biosynthesis via de novo pathway; 5-amino-1-(5-phospho-D-ribosyl)imidazole-4-carboxylate from 5-amino-1-(5-phospho-D-ribosyl)imidazole (N5-CAIR route): step 2/2. Functionally, catalyzes the conversion of N5-carboxyaminoimidazole ribonucleotide (N5-CAIR) to 4-carboxy-5-aminoimidazole ribonucleotide (CAIR). This chain is N5-carboxyaminoimidazole ribonucleotide mutase, found in Methanocaldococcus jannaschii (strain ATCC 43067 / DSM 2661 / JAL-1 / JCM 10045 / NBRC 100440) (Methanococcus jannaschii).